Reading from the N-terminus, the 144-residue chain is Transcription antitermination protein NusB (144 aa).

The protein belongs to the NusB family.

Functionally, involved in transcription antitermination. Required for transcription of ribosomal RNA (rRNA) genes. Binds specifically to the boxA antiterminator sequence of the ribosomal RNA (rrn) operons. This is Transcription antitermination protein NusB from Streptomyces avermitilis (strain ATCC 31267 / DSM 46492 / JCM 5070 / NBRC 14893 / NCIMB 12804 / NRRL 8165 / MA-4680).